The sequence spans 85 residues: Large ribosomal subunit protein bL27 (85 aa).

Belongs to the bacterial ribosomal protein bL27 family.

In Ruthia magnifica subsp. Calyptogena magnifica, this protein is Large ribosomal subunit protein bL27.